The primary structure comprises 718 residues: MRAVLETADIAIVALYFILVMCIGFFAMWKSNRSTVSGYFLAGRSMTWVAIGASLFVSNIGSEHFIGLAGSGAASGFAVGAWEFNALLLLQLLGWVFIPIYIRSGVYTMPEYLSKRFGGHRIQVYFAALSLILYIFTKLSVDLYSGALFIQESLGWNLYVSVILLIGMTALLTVTGGLVAVIYTDTLQALLMIVGALTLMIISMMEIGGFEEVKRRYMLASPNVTSILLTYNLSNTNSCNVHPKKDALKMLRNPTDEDVPWPGFVLGQTPASVWYWCADQVIVQRVLAAKNIAHAKGSTLMAGFLKLLPMFIIVVPGMISRILFADDIACINPEHCMQVCGSRAGCSNIAYPRLVMKLVPVGLRGLMMAVMIAALMSDLDSIFNSASTIFTLDVYKLIRRSASSRELMIVGRIFVAFMVVISIAWVPIIVEMQGGQMYLYIQEVADYLTPPVAALFLLAIFWKRCNEQGAFYGGMAGFVLGAVRLTLAFAYRAPECDQPDNRPGFIKDIHYMYVATALFWVTGLITVIVSLLTPPPTKEQIRTTTFWSKKSLVVKESCSPKDEPYKMQEKSILRCSENSEATNHIIPNGKSEDSIKGLQPEDVNLLVTCREEGNPVASLGHSEAETPVDAYSNGQAALMGEKERKKETEDGGRYWKFIDWFCGFKSKSLSKRSLRDLMEEEAVCLQMLEEPPQVKLILNIGLFAVCSLGIFMFVYFSL.

The Extracellular segment spans residues 1–9; sequence MRAVLETAD. A helical membrane pass occupies residues 10–29; it reads IAIVALYFILVMCIGFFAMW. Residues 30 to 38 lie on the Cytoplasmic side of the membrane; the sequence is KSNRSTVSG. Residues 39–57 form a helical membrane-spanning segment; it reads YFLAGRSMTWVAIGASLFV. Topologically, residues 58-86 are extracellular; it reads SNIGSEHFIGLAGSGAASGFAVGAWEFNA. A helical membrane pass occupies residues 87–110; the sequence is LLLLQLLGWVFIPIYIRSGVYTMP. Residues 111–123 are Cytoplasmic-facing; sequence EYLSKRFGGHRIQ. Residues 124–144 traverse the membrane as a helical segment; the sequence is VYFAALSLILYIFTKLSVDLY. Residues 145-157 lie on the Extracellular side of the membrane; that stretch reads SGALFIQESLGWN. The chain crosses the membrane as a helical span at residues 158–183; sequence LYVSVILLIGMTALLTVTGGLVAVIY. Topologically, residues 184–186 are cytoplasmic; the sequence is TDT. Residues 187–205 form a helical membrane-spanning segment; it reads LQALLMIVGALTLMIISMM. Residues 206 to 303 are Extracellular-facing; it reads EIGGFEEVKR…HAKGSTLMAG (98 aa). A glycan (N-linked (GlcNAc...) asparagine) is linked at Asn-232. Residues 304–324 traverse the membrane as a helical segment; that stretch reads FLKLLPMFIIVVPGMISRILF. Residues 325–353 are Cytoplasmic-facing; that stretch reads ADDIACINPEHCMQVCGSRAGCSNIAYPR. Residues 354–376 form a helical membrane-spanning segment; the sequence is LVMKLVPVGLRGLMMAVMIAALM. At 377-406 the chain is on the extracellular side; it reads SDLDSIFNSASTIFTLDVYKLIRRSASSRE. A helical membrane pass occupies residues 407–430; the sequence is LMIVGRIFVAFMVVISIAWVPIIV. Residues 431 to 443 lie on the Cytoplasmic side of the membrane; the sequence is EMQGGQMYLYIQE. Residues 444–462 form a helical membrane-spanning segment; that stretch reads VADYLTPPVAALFLLAIFW. The Extracellular segment spans residues 463–510; it reads KRCNEQGAFYGGMAGFVLGAVRLTLAFAYRAPECDQPDNRPGFIKDIH. Residues 511–532 form a helical membrane-spanning segment; sequence YMYVATALFWVTGLITVIVSLL. The Cytoplasmic segment spans residues 533–695; it reads TPPPTKEQIR…QMLEEPPQVK (163 aa). Ser-594 and Ser-632 each carry phosphoserine. A helical membrane pass occupies residues 696 to 716; the sequence is LILNIGLFAVCSLGIFMFVYF. The Extracellular portion of the chain corresponds to 717-718; sequence SL.

The protein belongs to the sodium:solute symporter (SSF) (TC 2.A.21) family. In terms of assembly, interacts with KCNQ2 (via the pore module). Interacts with KCNQ1; this interaction is direct. Forms coregulatory complexes with ion channels KCNQ2-KCNQ3 and KCNQ1-KCNE2. In terms of tissue distribution, kidney cortex and medulla.

Its subcellular location is the apical cell membrane. It is found in the basolateral cell membrane. It carries out the reaction myo-inositol(out) + 2 Na(+)(out) = myo-inositol(in) + 2 Na(+)(in). The catalysed reaction is scyllo-inositol(out) + 2 Na(+)(out) = scyllo-inositol(in) + 2 Na(+)(in). With respect to regulation, inhibited by phlorizin and phloretin. Its function is as follows. Electrogenic Na(+)-coupled sugar symporter that actively transports myo-inositol and its stereoisomer scyllo-inositol across the plasma membrane, with a Na(+) to sugar coupling ratio of 2:1. Maintains myo-inositol concentration gradient that defines cell volume and fluid balance during osmotic stress, in particular in the fetoplacental unit and central nervous system. Forms coregulatory complexes with voltage-gated K(+) ion channels, allosterically altering ion selectivity, voltage dependence and gating kinetics of the channel. In turn, K(+) efflux through the channel forms a local electrical gradient that modulates electrogenic Na(+)-coupled myo-inositol influx through the transporter. Associates with KCNQ1-KCNE2 channel in the apical membrane of choroid plexus epithelium and regulates the myo-inositol gradient between blood and cerebrospinal fluid with an impact on neuron excitability. Associates with KCNQ2-KCNQ3 channel altering ion selectivity, increasing Na(+) and Cs(+) permeation relative to K(+) permeation. Provides myo-inositol precursor for biosynthesis of phosphoinositides such as PI(4,5)P2, thus indirectly affecting the activity of phosphoinositide-dependent ion channels and Ca(2+) signaling upon osmotic stress. Has very low affinity for sugars such as L-fucose and L-xylose, with an affinity about three orders of magnitude lower than myo-inositol. The protein is Sodium/myo-inositol cotransporter (SLC5A3) of Canis lupus familiaris (Dog).